A 291-amino-acid chain; its full sequence is Protease HtpX (291 aa).

2 helical membrane passes run 4-24 (VLLFLATNLAVMLVLSIVLSV) and 37-57 (GGLLLMAAVFGFGGSIISLLM). Residue H143 participates in Zn(2+) binding. Residue E144 is part of the active site. Position 147 (H147) interacts with Zn(2+). The next 2 helical transmembrane spans lie at 158-178 (LIQGVVNTFVIYISRVLAGIV) and 198-218 (FAISMVFELIFGILASTIVMW). E224 contributes to the Zn(2+) binding site.

This sequence belongs to the peptidase M48B family. The cofactor is Zn(2+).

Its subcellular location is the cell inner membrane. This chain is Protease HtpX, found in Tolumonas auensis (strain DSM 9187 / NBRC 110442 / TA 4).